The chain runs to 1208 residues: E3 ubiquitin-protein ligase DZIP3 (1208 aa).

A compositionally biased stretch (basic and acidic residues) spans 10–29 (VRHPAVEDQRKEETENKLEK). Disordered stretches follow at residues 10–38 (VRHP…NKQE) and 637–698 (GTSI…PHSV). Coiled coils occupy residues 14 to 43 (AVED…DIPT), 647 to 676 (ESLK…SKED), 792 to 853 (IASL…SKLN), and 904 to 939 (QLKA…KVKQ). The span at 637-647 (GTSIPSESSTE) shows a compositional bias: polar residues. Basic and acidic residues predominate over residues 648-657 (SLKDLQEVKS). Positions 658 to 669 (KQRKKKKTKNKK) are enriched in basic residues. Basic and acidic residues predominate over residues 670–693 (NKDSKEDQVPYVVEKEEQLRKEQA). The interval 1088–1145 (KSQSQGKSVSNVNCVSPSHSPSQPDAAQPPKPAWRPLTSQGPATWEGASNPDEEEEEE) is disordered. The span at 1089-1112 (SQSQGKSVSNVNCVSPSHSPSQPD) shows a compositional bias: polar residues. An RING-type; atypical zinc finger spans residues 1148–1188 (CVICHENLSPENLSVLPCAHKFHAQCIRPWLMQQGTCPTCR).

Interacts with DAZ proteins. Widely expressed at low level. Highly expressed in skeletal muscle, kidney and heart. Expressed at low level in placenta, lung, brain, liver and pancreas.

It is found in the cytoplasm. The catalysed reaction is S-ubiquitinyl-[E2 ubiquitin-conjugating enzyme]-L-cysteine + [acceptor protein]-L-lysine = [E2 ubiquitin-conjugating enzyme]-L-cysteine + N(6)-ubiquitinyl-[acceptor protein]-L-lysine.. It participates in protein modification; protein ubiquitination. Functionally, E3 Ubiquitin ligase proteins mediate ubiquitination and subsequent proteasomal degradation of target proteins. E3 ubiquitin ligases accept ubiquitin from an E2 ubiquitin-conjugating enzyme in the form of a thioester and then directly transfers the ubiquitin to targeted substrates. Able to specifically bind RNA. In Homo sapiens (Human), this protein is E3 ubiquitin-protein ligase DZIP3 (DZIP3).